A 915-amino-acid polypeptide reads, in one-letter code: WD repeat-containing protein 44 (915 aa).

Residues 1 to 14 (MASESDTEEFYDAP) show a composition bias toward acidic residues. The tract at residues 1–24 (MASESDTEEFYDAPEDVHLGTGYP) is disordered. N-acetylalanine is present on Ala2. The segment at 2–173 (ASESDTEEFY…SSGEQLDASG (172 aa)) is binding activity. Ser3 is modified (phosphoserine). Residues 9 to 15 (EFYDAPE) carry the FFAT-like motif motif. Position 11 is a phosphotyrosine (Tyr11). Ser27, Ser50, Ser66, Ser71, Ser81, and Ser126 each carry phosphoserine. Disordered regions lie at residues 79–102 (DDSLDSKGKGLSDEATAGPSVAGT), 117–174 (LQQD…ASGL), and 208–282 (VEEV…PKEN). Residues 114 to 139 (EHELQQDSEKAESQNVAEESELETQK) adopt a coiled-coil conformation. A compositionally biased stretch (basic and acidic residues) spans 146-155 (TCEKSEKTVD). 2 positions are modified to phosphothreonine: Thr161 and Thr221. The tract at residues 213–259 (PAKPPRHLTPEPDIVASTKKPVPARPPPPTNFPPPRPPPPSRPAPPP) is important for interaction with ARHGAP26 AND ARHGAP10. Positions 235-258 (PARPPPPTNFPPPRPPPPSRPAPP) are enriched in pro residues. Ser264 carries the phosphoserine modification. The segment covering 264–280 (SELEFEALKTPDLDVPK) has biased composition (basic and acidic residues). Position 273 is a phosphothreonine (Thr273). An important for interaction with RAB11A region spans residues 336 to 349 (VMGPQRPRSNSGRE). A phosphoserine mark is found at Ser344 and Ser346. Thr351 and Thr403 each carry phosphothreonine. Disordered stretches follow at residues 399–425 (SNDATQSDDEEKLQSQQTDTDGGRLKQ) and 461–481 (DEVFHTDQDDPSSSDDEGMPY). A phosphoserine mark is found at Ser405, Ser472, Ser473, and Ser474. Acidic residues predominate over residues 469–478 (DDPSSSDDEG). Tyr481 is modified (phosphotyrosine). One copy of the WD 1 repeat lies at 511–550 (EHMGAVWTMKFSHCGRLLASAGQDNIVRIWALKNAFDYFN). Residues 559 to 593 (EGRVSPSPSQESLSSSKSDTDMGVCSGTDEDPDDK) form a disordered region. Phosphoserine is present on residues Ser563 and Ser567. Residues 563–575 (SPSPSQESLSSSK) are compositionally biased toward low complexity. WD repeat units lie at residues 607–645 (GHTADLLDLSWSKNYFLLSSSMDKTVRLWHISRRECLCC), 647–687 (QHID…VALW), 692–731 (GQTKLITAANFCQNGKYAVIGTYDGRCIFYDTEHLKYHTQ), 742–781 (KVGRKITGIEPLPGENKILVTSNDSRIRLYDLRDLSLSMK), 786–825 (VNSSSQIKASFSHDFTYLVSGSEDKYVYIWSTYHDLSKFT), 840–880 (AHNA…EVLD), and 882–915 (TSTGIVKTDNTEVLLSADFTGAIKVFINKRKTVS).

Interacts with the GTP-bound form of RAB11 when membrane-associated. Interacts with GRAF1/ARHGAP26 or GRAF2/ARHGAP10; the interaction connects the endoplasmic reticulum (ER) with the endosomal tubule. Interacts (via FFAT-like motif) with VAPA (via MSP domain) or VAPB (via MSP domain); the interaction connects the ER with the endosomal tubule. Does not bind to other Rab and Rho small G proteins. In terms of processing, phosphorylated by ATK1; the phosphorylation stabilizes its interaction with RAB11A and RAB11B.

Its subcellular location is the cytoplasm. The protein resides in the cytosol. The protein localises to the perinuclear region. It localises to the endosome membrane. It is found in the golgi apparatus. Its subcellular location is the trans-Golgi network. In terms of biological role, downstream effector for Rab11 which regulates Rab11 intracellular membrane trafficking functions such as endocytic recycling, intracellular ciliogenesis and protein export. ATK1-mediated phosphorylation of WDR44 induces binding to Rab11 which activates endocytic recycling of transferrin receptor back to the plasma membrane. When bound to Rab11, prevents the formation of the ciliogenic Rab11-Rabin8/RAB3IP-RAB11FIP3 complex, therefore inhibiting preciliary trafficking and ciliogenesis. Participates in neo-synthesized protein export by connecting the endoplasmic reticulum (ER) with the endosomal tubule via direct interactions with the integral ER proteins VAPA or VAPB and the endosomal protein GRAFs (GRAF1/ARHGAP26 or GRAF2/ARHGAP10), which facilitates the transfer of proteins such as E-cadherin, MPP14 and CFTR into a Rab8-Rab10-Rab11-dependent export route. This is WD repeat-containing protein 44 from Mus musculus (Mouse).